Reading from the N-terminus, the 117-residue chain is MKMYKLMLGLVLAGLVSLSAQAIEQRDYHKEVIGKDCKSCHDQGVKNYPSDQACLQCHDVDELAEETARSEEDKWQNPHNNLHYGKELPCIECHGEHEAKKPICSNCHTFKYDKHKE.

Positions 1–22 (MKMYKLMLGLVLAGLVSLSAQA) are cleaved as a signal peptide. Heme c-binding residues include histidine 29, cysteine 37, cysteine 40, histidine 41, cysteine 54, cysteine 57, histidine 58, histidine 79, histidine 83, cysteine 90, cysteine 93, histidine 94, histidine 97, cysteine 104, cysteine 107, and histidine 108.

In terms of assembly, the ArdAB flavocytochrome c is composed of a FAD-containing subunit (ArdA) and a heme c-containing subunit (ArdB). Requires heme c as cofactor.

The protein resides in the periplasm. With respect to regulation, methacrylate acts as a competitive inhibitor of the acrylate reductase activity and suppresses the reductase activity in dose-dependent manner. Its function is as follows. Heme c-containing subunit of the ArdAB flavocytochrome c, which catalyzes the reduction of acrylate to propanoate and supports dimethylsulfoniopropionate-dependent anaerobic respiration. In vitro, can use the artificial electron donor methyl viologen. The natural electron donor is probably a low-potential cytochrome c. Also shows weak activity toward methacrylate in vitro (at a 22-fold lower rate) but cannot use other tested 2-enoates, including crotonic, fumaric, sorbic, urocanic, cinnamic, p-coumaric, caffeic or ferulic acids. The protein catalyzes a unidirectional reaction and cannot oxidize propanoate with phenazine metasulfate and dichlorophenolindophenol as electron acceptors. The polypeptide is Acrylate reductase cytochrome subunit (Shewanella woodyi (strain ATCC 51908 / MS32)).